A 266-amino-acid chain; its full sequence is Calpain small subunit 1 (266 aa).

The residue at position 1 (methionine 1) is an N-acetylmethionine. Residue serine 6 is modified to Phosphoserine. An EF-hand 1; atypical domain is found at 94–128; the sequence is EEVRQFRRLFAQLAGDDMEVSATELMNILNKVVTR. Alanine 107, aspartate 110, glutamate 112, glutamate 117, aspartate 135, aspartate 150, aspartate 152, threonine 154, lysine 156, and glutamate 161 together coordinate Ca(2+). 4 consecutive EF-hand domains span residues 137–170, 167–202, 203–231, and 232–266; these read FGIDTCRSMVAVMDSDTTGKLGFEEFKYLWNNIK, NNIKKWQAIYKQFDVDRSGTIGSSELPGAFEAAGFH, LNEHLYSMIIRRYSDEGGNMDFDNFISCL, and VRLDAMFRAFKSLDKDGTGQIQVNIQEWLQLTMYS. Lysine 177 carries the post-translational modification N6-acetyllysine. Residues aspartate 180, aspartate 182, serine 184, threonine 186, glutamate 191, and aspartate 223 each contribute to the Ca(2+) site.

Homodimer or heterodimer of a large (catalytic) and a small (regulatory) subunit. In presence of calcium, the heterodimer dissociates.

It localises to the cytoplasm. The protein localises to the cell membrane. Functionally, regulatory subunit of the calcium-regulated non-lysosomal thiol-protease which catalyzes limited proteolysis of substrates involved in cytoskeletal remodeling and signal transduction. Essential for embryonic development. The sequence is that of Calpain small subunit 1 (CAPNS1) from Sus scrofa (Pig).